Reading from the N-terminus, the 174-residue chain is UPF0398 protein YfdB (174 aa).

It belongs to the UPF0398 family.

The sequence is that of UPF0398 protein YfdB (yfdB) from Lactococcus lactis subsp. lactis (strain IL1403) (Streptococcus lactis).